Consider the following 185-residue polypeptide: Ribosome-recycling factor (185 aa).

The protein belongs to the RRF family.

It localises to the cytoplasm. Functionally, responsible for the release of ribosomes from messenger RNA at the termination of protein biosynthesis. May increase the efficiency of translation by recycling ribosomes from one round of translation to another. The chain is Ribosome-recycling factor from Laribacter hongkongensis (strain HLHK9).